The following is a 151-amino-acid chain: MRKYFLGEEFTKQDLKQMNPLVLAYIGDAVYEIFIRTYIISKNKDTCVNKLHKKTIQFVKADAQSYFIREIQKYLNEEEIKVFKRGRNTKSNTSAKNASIQDYRMATGFETVIGYLYLLNEDERLEEIMKLVINLYEESSQNEGENHGSKS.

Residue Asp28 is part of the active site.

The protein belongs to the MrnC RNase family. As to quaternary structure, homodimer. Mg(2+) is required as a cofactor.

It is found in the cytoplasm. Functionally, involved in correct processing of both the 5' and 3' ends of 23S rRNA precursor. Processes 30S rRNA precursor transcript even in absence of ribonuclease 3 (Rnc); Rnc processes 30S rRNA into smaller rRNA precursors. This chain is Mini-ribonuclease 3, found in Clostridium tetani (strain Massachusetts / E88).